Consider the following 266-residue polypeptide: Undecaprenyl-diphosphatase (266 aa).

The next 7 helical transmembrane spans lie at 41–61 (NLAFTIVVHVATVFSTLVVLW), 80–100 (TKYVINILISMIPIGIVGVFF), 107–127 (IFGSGLLVVGCMLLLTAALLA), 140–160 (ISMKDAFIIGLAQACAVMPGL), 180–200 (LAQFSFLMVIPPILGEALLDV), 213–233 (IPALSLAVGFMAAFVSGCVAC), and 245–265 (LIYFAIYCAIAGLVTIACTLL).

This sequence belongs to the UppP family.

Its subcellular location is the cell inner membrane. The enzyme catalyses di-trans,octa-cis-undecaprenyl diphosphate + H2O = di-trans,octa-cis-undecaprenyl phosphate + phosphate + H(+). Catalyzes the dephosphorylation of undecaprenyl diphosphate (UPP). Confers resistance to bacitracin. The polypeptide is Undecaprenyl-diphosphatase (Parabacteroides distasonis (strain ATCC 8503 / DSM 20701 / CIP 104284 / JCM 5825 / NCTC 11152)).